Reading from the N-terminus, the 691-residue chain is MQSSTSTDQHVLHHMDPHRFTSQIPTATSSQLRRRNSTNQGLTDMINKSIARNTISGTGIPTGGINKNKRTRSTVAGGTNGTALALNDKSNSRNSVSRLSINQLGSLQQHLSNRDPRPLRDKNFQSAIQEEIYDYLKKNKFDIETNHPISIKFLKQPTQKGFIIIFKWLYLRLDPGYGFTKSIENEIYQILKNLRYPFLESINKSQISAVGGSNWHKFLGMLHWMVRTNIKLDMCLNKVDRSLINQNTQEITILSQPLKTLDEQDQRQERYELMVEKLLIDYFTESYKSFLKLEDNYEPSMQELKLGFEKFVHIINTDIANLQTQNDNLYEKYQEVMKISQKIKTTREKWKALKSDSNKYENYVNAMKQKSQEWPGKLEKMKSECELKEEEIKALQSNISELHKILRKKGISTEQFELQNQEREKLTRELDKINIQSDKLTSSIKSRKLEAEGIFKSLLDTLRQYDSSIQNLTRSRSQLGHNVNDSSLKINISENLLDRDFHEGISYEQLFPKGSGINESIKKSILKLNDEIQERIKTIEKDNITLEKDIKNLKHDINEKTQINEKLELELSEANSKFELSKQENERLLVAQRIEIEKMEKKINDSNLLMKTKISDAEELVTSTELKLEELKVDLNRKRYKLHQQVIHVIDITSKFKINIQSSLENSENELGNVIEELRNLEFETEHNVTN.

The segment at 1-95 is disordered; it reads MQSSTSTDQH…LNDKSNSRNS (95 aa). Basic and acidic residues predominate over residues 10–19; the sequence is HVLHHMDPHR. Over residues 20 to 42 the composition is skewed to polar residues; sequence FTSQIPTATSSQLRRRNSTNQGL. Thr38 carries the phosphothreonine modification. Residues 54-65 are compositionally biased toward low complexity; it reads TISGTGIPTGGI. The residue at position 248 (Thr248) is a Phosphothreonine. Coiled-coil stretches lie at residues 376–446 and 522–686; these read GKLE…SIKS and KKSI…FETE.

This sequence belongs to the NDC80/HEC1 family. Component of the NDC80 complex, which consists of NDC80, NUF2, SPC24 and SPC25. The NDC80 complex is formed by two subcomplexes, NDC80-NUF2 and SPC24-SPC25, which are joined end-to-end through their coiled-coil domains. It has a rod-like structure with a length of 570 Angstroms and globular domains at either end. The NDC80-NUF2 globular domains are probably directed to microtubules, the SPC24-SPC25 globular domains to the centromere. NDC80 probably interacts with SMC1 and SMC2. Also interacts with KIN3. Interacts with DMC1.

Its subcellular location is the nucleus. The protein resides in the chromosome. The protein localises to the centromere. It is found in the kinetochore. Acts as a component of the essential kinetochore-associated NDC80 complex, which is involved in chromosome segregation and spindle checkpoint activity. This Saccharomyces cerevisiae (strain ATCC 204508 / S288c) (Baker's yeast) protein is Kinetochore protein NDC80.